The sequence spans 166 residues: Replication restart protein DnaT (166 aa).

Belongs to the DnaT family. In terms of assembly, homooligomerizes. Interacts with PriB. Component of the replication restart primosome. Primosome assembly occurs via a 'hand-off' mechanism. PriA binds to replication forks, subsequently PriB then DnaT bind; DnaT then displaces ssDNA to generate the helicase loading substrate.

Its function is as follows. Involved in the restart of stalled replication forks, which reloads the replicative helicase on sites other than the origin of replication. Can function in multiple replication restart pathways. Displaces ssDNA from a PriB-ssDNA complex. Probably forms a spiral filament on ssDNA. The protein is Replication restart protein DnaT of Buchnera aphidicola subsp. Schizaphis graminum (strain Sg).